The chain runs to 143 residues: Flagellar assembly factor FliW (143 aa).

It belongs to the FliW family. In terms of assembly, interacts with translational regulator CsrA and flagellin(s).

The protein resides in the cytoplasm. Acts as an anti-CsrA protein, binds CsrA and prevents it from repressing translation of its target genes, one of which is flagellin. Binds to flagellin and participates in the assembly of the flagellum. This Bacillus licheniformis (strain ATCC 14580 / DSM 13 / JCM 2505 / CCUG 7422 / NBRC 12200 / NCIMB 9375 / NCTC 10341 / NRRL NRS-1264 / Gibson 46) protein is Flagellar assembly factor FliW.